The following is a 180-amino-acid chain: Large ribosomal subunit protein uL5 (180 aa).

The protein belongs to the universal ribosomal protein uL5 family. Part of the 50S ribosomal subunit; part of the 5S rRNA/L5/L18/L25 subcomplex. Contacts the 5S rRNA and the P site tRNA. Forms a bridge to the 30S subunit in the 70S ribosome.

Its function is as follows. This is one of the proteins that bind and probably mediate the attachment of the 5S RNA into the large ribosomal subunit, where it forms part of the central protuberance. In the 70S ribosome it contacts protein S13 of the 30S subunit (bridge B1b), connecting the 2 subunits; this bridge is implicated in subunit movement. Contacts the P site tRNA; the 5S rRNA and some of its associated proteins might help stabilize positioning of ribosome-bound tRNAs. The sequence is that of Large ribosomal subunit protein uL5 from Acholeplasma laidlawii (strain PG-8A).